A 127-amino-acid polypeptide reads, in one-letter code: Large ribosomal subunit protein eL8 (127 aa).

It belongs to the eukaryotic ribosomal protein eL8 family. In terms of assembly, part of the 50S ribosomal subunit. Probably part of the RNase P complex.

The protein resides in the cytoplasm. Its function is as follows. Multifunctional RNA-binding protein that recognizes the K-turn motif in ribosomal RNA, the RNA component of RNase P, box H/ACA, box C/D and box C'/D' sRNAs. The protein is Large ribosomal subunit protein eL8 of Desulfurococcus amylolyticus (strain DSM 18924 / JCM 16383 / VKM B-2413 / 1221n) (Desulfurococcus kamchatkensis).